Here is a 294-residue protein sequence, read N- to C-terminus: Small ribosomal subunit protein uS2 (294 aa).

The interval 254–294 (ESSNTEAPVAETAAAEAPVADAAIEAPVAEEAKTTEADDTK) is disordered. Over residues 259–282 (EAPVAETAAAEAPVADAAIEAPVA) the composition is skewed to low complexity. Positions 283-294 (EEAKTTEADDTK) are enriched in basic and acidic residues.

It belongs to the universal ribosomal protein uS2 family.

The protein is Small ribosomal subunit protein uS2 of Renibacterium salmoninarum (strain ATCC 33209 / DSM 20767 / JCM 11484 / NBRC 15589 / NCIMB 2235).